A 536-amino-acid chain; its full sequence is Light-independent protochlorophyllide reductase subunit B (536 aa).

Aspartate 36 contacts [4Fe-4S] cluster. The active-site Proton donor is aspartate 292. Glycine 427–leucine 428 serves as a coordination point for substrate. The tract at residues glutamine 447–proline 489 is disordered. Positions serine 448–threonine 469 are enriched in low complexity. Residues asparagine 470–glutamate 483 show a composition bias toward polar residues.

Belongs to the ChlB/BchB/BchZ family. In terms of assembly, protochlorophyllide reductase is composed of three subunits; ChlL, ChlN and ChlB. Forms a heterotetramer of two ChlB and two ChlN subunits. Requires [4Fe-4S] cluster as cofactor.

The catalysed reaction is chlorophyllide a + oxidized 2[4Fe-4S]-[ferredoxin] + 2 ADP + 2 phosphate = protochlorophyllide a + reduced 2[4Fe-4S]-[ferredoxin] + 2 ATP + 2 H2O. The protein operates within porphyrin-containing compound metabolism; chlorophyll biosynthesis (light-independent). Functionally, component of the dark-operative protochlorophyllide reductase (DPOR) that uses Mg-ATP and reduced ferredoxin to reduce ring D of protochlorophyllide (Pchlide) to form chlorophyllide a (Chlide). This reaction is light-independent. The NB-protein (ChlN-ChlB) is the catalytic component of the complex. The sequence is that of Light-independent protochlorophyllide reductase subunit B from Prochlorococcus marinus (strain MIT 9303).